The sequence spans 223 residues: Deoxyribose-phosphate aldolase 2 (223 aa).

D92 acts as the Proton donor/acceptor in catalysis. The Schiff-base intermediate with acetaldehyde role is filled by K154. The Proton donor/acceptor role is filled by K183.

It belongs to the DeoC/FbaB aldolase family. DeoC type 1 subfamily.

The protein resides in the cytoplasm. The catalysed reaction is 2-deoxy-D-ribose 5-phosphate = D-glyceraldehyde 3-phosphate + acetaldehyde. It participates in carbohydrate degradation; 2-deoxy-D-ribose 1-phosphate degradation; D-glyceraldehyde 3-phosphate and acetaldehyde from 2-deoxy-alpha-D-ribose 1-phosphate: step 2/2. Its function is as follows. Catalyzes a reversible aldol reaction between acetaldehyde and D-glyceraldehyde 3-phosphate to generate 2-deoxy-D-ribose 5-phosphate. The polypeptide is Deoxyribose-phosphate aldolase 2 (Oceanobacillus iheyensis (strain DSM 14371 / CIP 107618 / JCM 11309 / KCTC 3954 / HTE831)).